The following is a 322-amino-acid chain: NADH oxidoreductase HCR (322 aa).

Residues 7 to 107 (QCPWRMQVHH…SDAMGEFTCD (101 aa)) enclose the FAD-binding FR-type domain. An oxidoreductase region spans residues 111–213 (EDKFLLLAAG…APYMDWVEQE (103 aa)). One can recognise a 2Fe-2S ferredoxin-type domain in the interval 237 to 322 (SGLKFTKLQP…CHPQGDLVLA (86 aa)). The [2Fe-2S] cluster site is built by cysteine 273, cysteine 278, cysteine 281, and cysteine 311.

In the N-terminal section; belongs to the FAD-binding oxidoreductase type 6 family. [2Fe-2S] cluster serves as cofactor. It depends on FAD as a cofactor.

Its function is as follows. NADH oxidoreductase acting in concert with HCP. The polypeptide is NADH oxidoreductase HCR (hcr) (Escherichia coli (strain K12)).